A 101-amino-acid polypeptide reads, in one-letter code: Integration host factor subunit alpha (101 aa).

Belongs to the bacterial histone-like protein family. In terms of assembly, heterodimer of an alpha and a beta chain.

Its function is as follows. This protein is one of the two subunits of integration host factor, a specific DNA-binding protein that functions in genetic recombination as well as in transcriptional and translational control. The sequence is that of Integration host factor subunit alpha from Halorhodospira halophila (strain DSM 244 / SL1) (Ectothiorhodospira halophila (strain DSM 244 / SL1)).